The following is a 211-amino-acid chain: FMN-dependent NADH:quinone oxidoreductase 3 (211 aa).

An FMN-binding site is contributed by 17 to 19; that stretch reads SFS.

This sequence belongs to the azoreductase type 1 family. As to quaternary structure, homodimer. It depends on FMN as a cofactor.

It carries out the reaction 2 a quinone + NADH + H(+) = 2 a 1,4-benzosemiquinone + NAD(+). The enzyme catalyses N,N-dimethyl-1,4-phenylenediamine + anthranilate + 2 NAD(+) = 2-(4-dimethylaminophenyl)diazenylbenzoate + 2 NADH + 2 H(+). Quinone reductase that provides resistance to thiol-specific stress caused by electrophilic quinones. Functionally, also exhibits azoreductase activity. Catalyzes the reductive cleavage of the azo bond in aromatic azo compounds to the corresponding amines. The chain is FMN-dependent NADH:quinone oxidoreductase 3 from Halalkalibacterium halodurans (strain ATCC BAA-125 / DSM 18197 / FERM 7344 / JCM 9153 / C-125) (Bacillus halodurans).